The primary structure comprises 480 residues: Vacuolar amino acid transporter 2 (480 aa).

The disordered stretch occupies residues 21–48 (LTNFPFPGTTDNDSDDGSQGQNSLNIIT). Residues 37–46 (GSQGQNSLNI) are compositionally biased toward polar residues. The next 9 membrane-spanning stretches (helical) occupy residues 72–92 (AFMN…PFAI), 95–115 (AGIL…DWTL), 145–165 (LILF…CIII), 214–234 (LSKA…TVVI), 263–283 (LSVI…FFSM), 297–317 (ISII…FAVF), 338–358 (IARL…IFVL), 394–414 (VFIT…FELI), and 447–467 (FYLC…QTII).

It belongs to the amino acid/polyamine transporter 2 family.

It is found in the vacuole membrane. Its function is as follows. Probable amino acid transporter of unknown specificity. The sequence is that of Vacuolar amino acid transporter 2 (AVT2) from Saccharomyces cerevisiae (strain ATCC 204508 / S288c) (Baker's yeast).